The primary structure comprises 118 residues: T cell receptor gamma variable 4 (118 aa).

An N-terminal signal peptide occupies residues 1–17 (MQWALAVLLAFLSPASQ). An Ig-like domain is found at 18–118 (KSSNLEGRTK…GVYYCATWDG (101 aa)). C41 and C113 are joined by a disulfide. N106 carries N-linked (GlcNAc...) asparagine glycosylation.

In terms of assembly, gamma-delta TR is a heterodimer composed of a gamma and delta chain; disulfide-linked. The gamma-delta TR is associated with the transmembrane signaling CD3 coreceptor proteins following the stoichiometry: a single gamma-delta TR heterodimer associates with one CD3D-CD3E heterodimer, one CD3G-CD3E heterodimer and one CD247 homodimer forming a stable octameric structure. Upon activation, gamma-delta TR complex associates with FCER1G to initiate intracellular signaling.

The protein localises to the cell membrane. Its function is as follows. V region of the variable domain of T cell receptor (TR) gamma chain that participates in the antigen recognition. Gamma-delta TRs recognize a variety of self and foreign non-peptide antigens frequently expressed at the epithelial boundaries between the host and external environment, including endogenous lipids presented by MH-like protein CD1D and phosphoantigens presented by butyrophilin-like molecule BTN3A1. Upon antigen recognition induces rapid, innate-like immune responses involved in pathogen clearance and tissue repair. Binding of gamma-delta TR complex to antigen triggers phosphorylation of immunoreceptor tyrosine-based activation motifs (ITAMs) in the CD3 chains by the LCK and FYN kinases, allowing the recruitment, phosphorylation, and activation of ZAP70 that facilitates phosphorylation of the scaffolding proteins LCP2 and LAT. This lead to the formation of a supramolecular signalosome that recruits the phospholipase PLCG1, resulting in calcium mobilization and ERK activation, ultimately leading to T cell expansion and differentiation into effector cells. Gamma-delta TRs are produced through somatic rearrangement of a limited repertoire of variable (V), diversity (D), and joining (J) genes. The potential diversity of gamma-delta TRs is conferred by the unique ability to rearrange (D) genes in tandem and to utilize all three reading frames. The combinatorial diversity is considerably increased by the sequence exonuclease trimming and random nucleotide (N) region additions which occur during the V-(D)-J rearrangements. The chain is T cell receptor gamma variable 4 from Homo sapiens (Human).